The following is a 333-amino-acid chain: MNQTLIQEILEVVEQAAIASAKLTGLGQKDEADAAAVEAMRLRMGKIEMKGKIVIGEGERDEAPMLYIGEEVGSGNGPGVDFAVDPCEGTNLCANNQRGSMAVLAASDTGGLFNAPDFYMNKLAAPPAAKGKVDIRNSATENLKILSNCLDLAIDELTVVVMDRARHKGLIKEIRECGAKIQPISDGDVQAAIACGFAGTGTHCLMGIGAAPEGVISAAAMRALGGHFQGQLVYDPAIAQTSEWADYTKEGNIKRLNEMGITDIDKIYEANELASGENVIFAGSGITDGLLFDGVKFEKDCTRTSSLVISTLDSTCRFTNTIHMKDGAKSISL.

Positions 33, 57, 85, and 88 each coordinate Mn(2+). Residues 88 to 90 (EGT), tyrosine 119, 164 to 166 (RAR), and 186 to 188 (DGD) each bind substrate. Glutamate 213 is a Mn(2+) binding site.

It belongs to the FBPase class 2 family. Homotetramer. The cofactor is Mn(2+).

The catalysed reaction is beta-D-fructose 1,6-bisphosphate + H2O = beta-D-fructose 6-phosphate + phosphate. It carries out the reaction D-sedoheptulose 1,7-bisphosphate + H2O = D-sedoheptulose 7-phosphate + phosphate. It participates in carbohydrate biosynthesis; Calvin cycle. Its function is as follows. Catalyzes the hydrolysis of fructose 1,6-bisphosphate (Fru 1,6-P2) and sedoheptulose 1,7-bisphosphate (Sed 1,7-P2) to fructose 6-phosphate and sedoheptulose 7-phosphate, respectively. The polypeptide is D-fructose 1,6-bisphosphatase class 2/sedoheptulose 1,7-bisphosphatase (Prochlorococcus marinus subsp. pastoris (strain CCMP1986 / NIES-2087 / MED4)).